The primary structure comprises 416 residues: Serine hydroxymethyltransferase (416 aa).

(6S)-5,6,7,8-tetrahydrofolate-binding positions include Leu121 and 125–127 (GHL). An N6-(pyridoxal phosphate)lysine modification is found at Lys229.

The protein belongs to the SHMT family. As to quaternary structure, homodimer. Pyridoxal 5'-phosphate serves as cofactor.

The protein localises to the cytoplasm. The enzyme catalyses (6R)-5,10-methylene-5,6,7,8-tetrahydrofolate + glycine + H2O = (6S)-5,6,7,8-tetrahydrofolate + L-serine. Its pathway is one-carbon metabolism; tetrahydrofolate interconversion. It participates in amino-acid biosynthesis; glycine biosynthesis; glycine from L-serine: step 1/1. Functionally, catalyzes the reversible interconversion of serine and glycine with tetrahydrofolate (THF) serving as the one-carbon carrier. This reaction serves as the major source of one-carbon groups required for the biosynthesis of purines, thymidylate, methionine, and other important biomolecules. Also exhibits THF-independent aldolase activity toward beta-hydroxyamino acids, producing glycine and aldehydes, via a retro-aldol mechanism. In Aromatoleum aromaticum (strain DSM 19018 / LMG 30748 / EbN1) (Azoarcus sp. (strain EbN1)), this protein is Serine hydroxymethyltransferase.